Here is a 329-residue protein sequence, read N- to C-terminus: Alpha/beta hydrolase domain-containing protein 17C (329 aa).

The segment at 46–85 (APEQRGPGAPAPASAASTSSASAAAQPAPQQPEEGGAGPG) is disordered. Residues 51–79 (GPGAPAPASAASTSSASAAAQPAPQQPEE) show a composition bias toward low complexity. Residues Ser-211, Asp-276, and His-305 each act as charge relay system in the active site.

This sequence belongs to the AB hydrolase superfamily. ABHD17 family. Palmitoylated on cysteine residues located in a cysteine cluster at the N-terminus which promotes membrane localization. Palmitoylation is required for post-synaptic localization and for depalmitoylating activity towards DLG4/PSD95.

The protein localises to the recycling endosome membrane. The protein resides in the cell projection. It is found in the dendritic spine. It localises to the postsynaptic density membrane. The catalysed reaction is S-hexadecanoyl-L-cysteinyl-[protein] + H2O = L-cysteinyl-[protein] + hexadecanoate + H(+). In terms of biological role, hydrolyzes fatty acids from S-acylated cysteine residues in proteins. Has depalmitoylating activity towards NRAS and DLG4/PSD95. The chain is Alpha/beta hydrolase domain-containing protein 17C from Bos taurus (Bovine).